A 689-amino-acid chain; its full sequence is MQDIQLDKRLSELLSQAVTPQTAQPLMQALSQSLNEHNIRYYVDDAPSITDSEYDRLMQQLKKLEAEYPQFVLADSPTQRVGGLALAKFEQITHLKPMLSLDNAFDEADFTAFHKRVSDRVGQVSFCCEPKLDGLAVSILYRNGVLERAATRGDGTVGEDITENVKTIKSIPLRLRGNNYPELVEVRGEAFMPKAAFEALNERARLKDDKQFVNPRNAAAGSLRQLDSKITASRALSFYAYALGVVEPSSHELAKTHYEQLQQLKSWGLPVSSEIKVCDELNQVFAYYKDILTRRSDLPFEIDGVVMKVNDIAQQQTLGFVAKSPRWAIAYKFPAQEEMTLLEGVDFQVGRTGAVTPVARLKPVFVGGVTVSNATLHNADEIERLGVMVGDTVIIRRAGDVIPQIVAIVPERRSEDAQAIVFPQHCPVCGSLVERLEGEAVARCSGGLFCEAQRKEAIKHFASRKALDIDGMGDKIVEQLIDKELVQSPADLFKLTASMMTMLDRMGMKSATNLALAIEAAKTTTLPRFLYALGIREVGEATAANLAAHFGSLDALRIATIEQLIEVEDIGEVVAQHVAHFFAQPHNLEVIDALIAAGVNWPAIEAPSADEQPLKGQTWVLTGTLNQLNRNDAKAQLQVLGAKVAGSVSKNTDCLVAGEAAGSKLAKAQELGVKVIGEDELLALLAANR.

NAD(+)-binding positions include Asp51–Asp55, Ser100–Leu101, and Glu129. The active-site N6-AMP-lysine intermediate is the Lys131. The NAD(+) site is built by Arg152, Glu189, Lys308, and Lys332. Zn(2+) contacts are provided by Cys426, Cys429, Cys444, and Cys450. Residues Ala609–Arg689 enclose the BRCT domain.

This sequence belongs to the NAD-dependent DNA ligase family. LigA subfamily. Mg(2+) is required as a cofactor. It depends on Mn(2+) as a cofactor.

The enzyme catalyses NAD(+) + (deoxyribonucleotide)n-3'-hydroxyl + 5'-phospho-(deoxyribonucleotide)m = (deoxyribonucleotide)n+m + AMP + beta-nicotinamide D-nucleotide.. In terms of biological role, DNA ligase that catalyzes the formation of phosphodiester linkages between 5'-phosphoryl and 3'-hydroxyl groups in double-stranded DNA using NAD as a coenzyme and as the energy source for the reaction. It is essential for DNA replication and repair of damaged DNA. The chain is DNA ligase from Shewanella oneidensis (strain ATCC 700550 / JCM 31522 / CIP 106686 / LMG 19005 / NCIMB 14063 / MR-1).